Here is a 252-residue protein sequence, read N- to C-terminus: Trans-aconitate 2-methyltransferase (252 aa).

Belongs to the methyltransferase superfamily. Tam family.

The protein localises to the cytoplasm. It catalyses the reaction trans-aconitate + S-adenosyl-L-methionine = (E)-3-(methoxycarbonyl)pent-2-enedioate + S-adenosyl-L-homocysteine. Functionally, catalyzes the S-adenosylmethionine monomethyl esterification of trans-aconitate. The protein is Trans-aconitate 2-methyltransferase of Escherichia coli O1:K1 / APEC.